Here is an 85-residue protein sequence, read N- to C-terminus: Beta-defensin 18 (85 aa).

An N-terminal signal peptide occupies residues 1 to 23 (MQSAMKLFFIFLIFVFSVSCGPS). Disulfide bonds link Cys-39-Cys-65, Cys-46-Cys-60, and Cys-50-Cys-66.

This sequence belongs to the beta-defensin family.

It is found in the secreted. Its function is as follows. Has antibacterial activity. The chain is Beta-defensin 18 (Defb18) from Rattus norvegicus (Rat).